The primary structure comprises 229 residues: Ribose-5-phosphate isomerase A (229 aa).

Substrate contacts are provided by residues 28 to 31 (TGST), 85 to 88 (DGAD), and 98 to 101 (KGRG). Glu-107 (proton acceptor) is an active-site residue. Residue Lys-125 participates in substrate binding.

Belongs to the ribose 5-phosphate isomerase family. As to quaternary structure, homodimer.

The enzyme catalyses aldehydo-D-ribose 5-phosphate = D-ribulose 5-phosphate. It participates in carbohydrate degradation; pentose phosphate pathway; D-ribose 5-phosphate from D-ribulose 5-phosphate (non-oxidative stage): step 1/1. In terms of biological role, catalyzes the reversible conversion of ribose-5-phosphate to ribulose 5-phosphate. This Pyrococcus furiosus (strain ATCC 43587 / DSM 3638 / JCM 8422 / Vc1) protein is Ribose-5-phosphate isomerase A.